The following is a 196-amino-acid chain: Peptidyl-tRNA hydrolase (196 aa).

Tyrosine 14 is a tRNA binding site. The Proton acceptor role is filled by histidine 19. TRNA is bound by residues tyrosine 64, asparagine 66, and asparagine 112.

The protein belongs to the PTH family. Monomer.

Its subcellular location is the cytoplasm. It catalyses the reaction an N-acyl-L-alpha-aminoacyl-tRNA + H2O = an N-acyl-L-amino acid + a tRNA + H(+). Functionally, hydrolyzes ribosome-free peptidyl-tRNAs (with 1 or more amino acids incorporated), which drop off the ribosome during protein synthesis, or as a result of ribosome stalling. Catalyzes the release of premature peptidyl moieties from peptidyl-tRNA molecules trapped in stalled 50S ribosomal subunits, and thus maintains levels of free tRNAs and 50S ribosomes. The sequence is that of Peptidyl-tRNA hydrolase from Methylocella silvestris (strain DSM 15510 / CIP 108128 / LMG 27833 / NCIMB 13906 / BL2).